A 267-amino-acid chain; its full sequence is Proteasome subunit alpha (267 aa).

A disordered region spans residues 231–267; it reads ETLLQERDSKESAESEEPKESEEGKKTGKKSDADSSD. Residues 234-267 are compositionally biased toward basic and acidic residues; that stretch reads LQERDSKESAESEEPKESEEGKKTGKKSDADSSD.

The protein belongs to the peptidase T1A family. As to quaternary structure, the 20S proteasome core is composed of 14 alpha and 14 beta subunits that assemble into four stacked heptameric rings, resulting in a barrel-shaped structure. The two inner rings, each composed of seven catalytic beta subunits, are sandwiched by two outer rings, each composed of seven alpha subunits. The catalytic chamber with the active sites is on the inside of the barrel. Has a gated structure, the ends of the cylinder being occluded by the N-termini of the alpha-subunits. Is capped by the proteasome-associated ATPase, ARC.

The protein localises to the cytoplasm. Its pathway is protein degradation; proteasomal Pup-dependent pathway. With respect to regulation, the formation of the proteasomal ATPase ARC-20S proteasome complex, likely via the docking of the C-termini of ARC into the intersubunit pockets in the alpha-rings, may trigger opening of the gate for substrate entry. Interconversion between the open-gate and close-gate conformations leads to a dynamic regulation of the 20S proteasome proteolysis activity. In terms of biological role, component of the proteasome core, a large protease complex with broad specificity involved in protein degradation. The protein is Proteasome subunit alpha of Mycobacterium marinum (strain ATCC BAA-535 / M).